A 607-amino-acid polypeptide reads, in one-letter code: Protein P1 (607 aa).

Residues M1–A22 form the signal peptide. A run of 3 helical transmembrane segments spans residues F115–A135, F137–L157, and T167–L187. In terms of domain architecture, Peptidase S39 spans I206–E400. Active-site for protease activity residues include H254, D289, and S357. 2 disordered regions span residues E457 to D485 and K517 to N607. A compositionally biased stretch (polar residues) spans E474–V484. A compositionally biased stretch (basic residues) spans K520–K531. The span at K532–S541 shows a compositional bias: basic and acidic residues. The segment covering A558 to P571 has biased composition (polar residues).

This sequence belongs to the peptidase S39B family. Specific enzymatic cleavages in vivo yield mature proteins. The protease probably cleaves itself and releases the VPg protein.

The protein resides in the membrane. Its function is as follows. Precursor from which the VPg molecule is probably released at the onset of the RNA synthesis. Essential for virus replication. This chain is Protein P1, found in Turnip yellows virus (isolate FL-1) (TuYV).